The following is a 303-amino-acid chain: Proteasome subunit beta (303 aa).

The propeptide at 1–67 is removed in mature form; by autocatalysis; the sequence is MTWQFPDRLS…SGGTGQLPHG (67 aa). The Nucleophile role is filled by T68.

The protein belongs to the peptidase T1B family. As to quaternary structure, the 20S proteasome core is composed of 14 alpha and 14 beta subunits that assemble into four stacked heptameric rings, resulting in a barrel-shaped structure. The two inner rings, each composed of seven catalytic beta subunits, are sandwiched by two outer rings, each composed of seven alpha subunits. The catalytic chamber with the active sites is on the inside of the barrel. Has a gated structure, the ends of the cylinder being occluded by the N-termini of the alpha-subunits. Is capped by the proteasome-associated ATPase, ARC.

It localises to the cytoplasm. The enzyme catalyses Cleavage of peptide bonds with very broad specificity.. It functions in the pathway protein degradation; proteasomal Pup-dependent pathway. Its activity is regulated as follows. The formation of the proteasomal ATPase ARC-20S proteasome complex, likely via the docking of the C-termini of ARC into the intersubunit pockets in the alpha-rings, may trigger opening of the gate for substrate entry. Interconversion between the open-gate and close-gate conformations leads to a dynamic regulation of the 20S proteasome proteolysis activity. In terms of biological role, component of the proteasome core, a large protease complex with broad specificity involved in protein degradation. In Mycobacterium avium (strain 104), this protein is Proteasome subunit beta.